The chain runs to 1838 residues: Type III effector DspE (1838 aa).

A compositionally biased stretch (basic and acidic residues) spans 1 to 12 (MELKSLGTEHKA). Disordered regions lie at residues 1-72 (MELK…AAHQ), 86-163 (KKFS…PTQQ), 182-264 (MAHP…VATP), 281-300 (LEGTDTTQSPLKPQSMLKGS), 398-418 (DGKSGKISLGSGTQSHNKTML), and 1480-1505 (NLAAGSRERSTTSGQFGSTTSASNNR). Positions 27 to 46 (ALQQGSSSSSPQNAAASLAA) are enriched in low complexity. The segment covering 91–103 (SAPQGQPGTTHSK) has biased composition (polar residues). A compositionally biased stretch (basic and acidic residues) spans 110-120 (LLARDDGETQH). Over residues 407 to 418 (GSGTQSHNKTML) the composition is skewed to polar residues. A compositionally biased stretch (low complexity) spans 1480 to 1502 (NLAAGSRERSTTSGQFGSTTSAS).

This sequence belongs to the AvrE family. In terms of assembly, interacts with the chaperone DspF (DspB/F).

Its subcellular location is the secreted. It localises to the host cell. With respect to regulation, polyamidoamine dendrimers inhibit channel and virulence activities. In terms of biological role, major virulence factor that may function as a water- and solute-permeable channel dedicated to creating osmotic/water potential perturbation and a water- and nutrient-rich apoplast in which bacteria multiply within the infected plant tissues. Expression in Xenopus oocytes results in inward and outward currents, permeability to water and osmolarity-dependent oocyte swelling and bursting. Its function is as follows. Acts as a major cell-death inducer during fire blight, a necrotic disease affecting plants of the rosaceous family, and during hypersensitive response (HR) on non-host plants. Essential for pathogenicity on host plants. Contributes quantitatively and in a strain-dependent fashion to HR elicitation in non-host plants such as tobacco. Induces cell death in leaves of apple, a host plant, and tobacco, a non-host plant. Also triggers necrosis in the widely used model, non-host, N.benthamiana and in yeast. Required for the transient multiplication and survival of E.amylovora in non-host A.thaliana leaves. In A.thaliana, triggers electrolyte leakage, activation of defense pathways, reactive oxygen species (ROS) accumulation and cell death. The toxicity of DspE in A.thaliana is associated with an early repression of de novo protein synthesis. In Erwinia amylovora (Fire blight bacteria), this protein is Type III effector DspE.